Consider the following 245-residue polypeptide: Ribonuclease PH (245 aa).

Phosphate is bound by residues arginine 86 and 124 to 126 (GTR).

The protein belongs to the RNase PH family. In terms of assembly, homohexameric ring arranged as a trimer of dimers.

It carries out the reaction tRNA(n+1) + phosphate = tRNA(n) + a ribonucleoside 5'-diphosphate. Phosphorolytic 3'-5' exoribonuclease that plays an important role in tRNA 3'-end maturation. Removes nucleotide residues following the 3'-CCA terminus of tRNAs; can also add nucleotides to the ends of RNA molecules by using nucleoside diphosphates as substrates, but this may not be physiologically important. Probably plays a role in initiation of 16S rRNA degradation (leading to ribosome degradation) during starvation. This Bacillus cereus (strain B4264) protein is Ribonuclease PH.